The primary structure comprises 88 residues: Small ribosomal subunit protein uS17 (88 aa).

It belongs to the universal ribosomal protein uS17 family. Part of the 30S ribosomal subunit.

One of the primary rRNA binding proteins, it binds specifically to the 5'-end of 16S ribosomal RNA. This is Small ribosomal subunit protein uS17 from Syntrophotalea carbinolica (strain DSM 2380 / NBRC 103641 / GraBd1) (Pelobacter carbinolicus).